Consider the following 60-residue polypeptide: Large ribosomal subunit protein bL32 (60 aa).

A compositionally biased stretch (basic residues) spans 1–16; the sequence is MAVPKRKTTPSKRGMR. The interval 1–60 is disordered; the sequence is MAVPKRKTTPSKRGMRRSADALKQPAYVENPDSGELHRPHHVDLKSGMYRGKQILKPKGE. Positions 34-44 are enriched in basic and acidic residues; the sequence is GELHRPHHVDL.

This sequence belongs to the bacterial ribosomal protein bL32 family.

The protein is Large ribosomal subunit protein bL32 of Parvibaculum lavamentivorans (strain DS-1 / DSM 13023 / NCIMB 13966).